The primary structure comprises 552 residues: 4-coumarate--CoA ligase-like 3 (552 aa).

Serine 207, serine 208, glycine 209, threonine 210, threonine 211, and lysine 215 together coordinate ATP. (E)-4-coumaroyl-AMP is bound at residue phenylalanine 252. Arginine 273 is a CoA binding site. An SBD1 region spans residues 275-346 (GLDDMMQAVE…EKYPTVNIFQ (72 aa)). Glycine 324, glutamine 346, glycine 347, and threonine 351 together coordinate (E)-4-coumaroyl-AMP. The ATP site is built by glutamine 346, glycine 347, threonine 351, aspartate 432, and arginine 447. Residues 347 to 411 (GYALTESHGS…LKGPSISKGY (65 aa)) are SBD2. Positions 449 and 453 each coordinate (E)-4-coumaroyl-AMP. Residues lysine 455 and glycine 456 each contribute to the CoA site. Lysine 538 provides a ligand contact to ATP. The Microbody targeting signal signature appears at 550-552 (SKL).

The protein belongs to the ATP-dependent AMP-binding enzyme family. Mg(2+) is required as a cofactor.

The protein localises to the peroxisome. The catalysed reaction is (E)-4-coumarate + ATP + CoA = (E)-4-coumaroyl-CoA + AMP + diphosphate. It catalyses the reaction (E)-4-coumarate + ATP + H(+) = (E)-4-coumaroyl-AMP + diphosphate. It carries out the reaction (E)-4-coumaroyl-AMP + CoA = (E)-4-coumaroyl-CoA + AMP + H(+). Its function is as follows. Carboxylate--CoA ligase that may use 4-coumarate as substrate. Follows a two-step reaction mechanism, wherein the carboxylate substrate first undergoes adenylation by ATP, followed by a thioesterification in the presence of CoA to yield the final CoA thioester. The polypeptide is 4-coumarate--CoA ligase-like 3 (Arabidopsis thaliana (Mouse-ear cress)).